A 249-amino-acid chain; its full sequence is tRNA (guanine-N(1)-)-methyltransferase (249 aa).

S-adenosyl-L-methionine is bound by residues Gly-113 and 133–138; that span reads IGDFVV.

Belongs to the RNA methyltransferase TrmD family. Homodimer.

It is found in the cytoplasm. It catalyses the reaction guanosine(37) in tRNA + S-adenosyl-L-methionine = N(1)-methylguanosine(37) in tRNA + S-adenosyl-L-homocysteine + H(+). Functionally, specifically methylates guanosine-37 in various tRNAs. The chain is tRNA (guanine-N(1)-)-methyltransferase from Neisseria gonorrhoeae (strain ATCC 700825 / FA 1090).